The sequence spans 373 residues: Chaperone protein DnaJ (373 aa).

Residues Asp5–Gly70 enclose the J domain. The CR-type zinc finger occupies Gly132–Thr214. Residues Cys145, Cys148, Cys162, Cys165, Cys188, Cys191, Cys202, and Cys205 each coordinate Zn(2+). CXXCXGXG motif repeat units follow at residues Cys145–Gly152, Cys162–Gly169, Cys188–Gly195, and Cys202–Gly209.

It belongs to the DnaJ family. In terms of assembly, homodimer. It depends on Zn(2+) as a cofactor.

Its subcellular location is the cytoplasm. Functionally, participates actively in the response to hyperosmotic and heat shock by preventing the aggregation of stress-denatured proteins and by disaggregating proteins, also in an autonomous, DnaK-independent fashion. Unfolded proteins bind initially to DnaJ; upon interaction with the DnaJ-bound protein, DnaK hydrolyzes its bound ATP, resulting in the formation of a stable complex. GrpE releases ADP from DnaK; ATP binding to DnaK triggers the release of the substrate protein, thus completing the reaction cycle. Several rounds of ATP-dependent interactions between DnaJ, DnaK and GrpE are required for fully efficient folding. Also involved, together with DnaK and GrpE, in the DNA replication of plasmids through activation of initiation proteins. In Clostridium botulinum (strain Alaska E43 / Type E3), this protein is Chaperone protein DnaJ.